The chain runs to 351 residues: Molybdenum import ATP-binding protein ModC (351 aa).

An ABC transporter domain is found at 1 to 229 (MLKINVKKQL…PLFLPWKLED (229 aa)). An ATP-binding site is contributed by 31–38 (GLSGSGKT). The Mop domain maps to 289-351 (KTSIRNILHG…FAQIKAVSVL (63 aa)).

This sequence belongs to the ABC transporter superfamily. Molybdate importer (TC 3.A.1.8) family. The complex is composed of two ATP-binding proteins (ModC), two transmembrane proteins (ModB) and a solute-binding protein (ModA).

Its subcellular location is the cell inner membrane. The catalysed reaction is molybdate(out) + ATP + H2O = molybdate(in) + ADP + phosphate + H(+). In terms of biological role, part of the ABC transporter complex ModABC involved in molybdenum import. Responsible for energy coupling to the transport system. This Pasteurella multocida (strain Pm70) protein is Molybdenum import ATP-binding protein ModC.